The chain runs to 482 residues: tRNA sulfurtransferase (482 aa).

The THUMP domain occupies 61-165 (LAIRDALTRI…DDRLLLIKGR (105 aa)). Residues 183 to 184 (LI), Lys-265, Gly-287, and Gln-296 each bind ATP. A disulfide bond links Cys-344 and Cys-456. The Rhodanese domain maps to 404-482 (FGPNDVILDI…GFANVKVYRP (79 aa)). Cys-456 serves as the catalytic Cysteine persulfide intermediate.

It belongs to the ThiI family.

The protein resides in the cytoplasm. The enzyme catalyses [ThiI sulfur-carrier protein]-S-sulfanyl-L-cysteine + a uridine in tRNA + 2 reduced [2Fe-2S]-[ferredoxin] + ATP + H(+) = [ThiI sulfur-carrier protein]-L-cysteine + a 4-thiouridine in tRNA + 2 oxidized [2Fe-2S]-[ferredoxin] + AMP + diphosphate. The catalysed reaction is [ThiS sulfur-carrier protein]-C-terminal Gly-Gly-AMP + S-sulfanyl-L-cysteinyl-[cysteine desulfurase] + AH2 = [ThiS sulfur-carrier protein]-C-terminal-Gly-aminoethanethioate + L-cysteinyl-[cysteine desulfurase] + A + AMP + 2 H(+). The protein operates within cofactor biosynthesis; thiamine diphosphate biosynthesis. Functionally, catalyzes the ATP-dependent transfer of a sulfur to tRNA to produce 4-thiouridine in position 8 of tRNAs, which functions as a near-UV photosensor. Also catalyzes the transfer of sulfur to the sulfur carrier protein ThiS, forming ThiS-thiocarboxylate. This is a step in the synthesis of thiazole, in the thiamine biosynthesis pathway. The sulfur is donated as persulfide by IscS. The chain is tRNA sulfurtransferase from Salmonella choleraesuis (strain SC-B67).